The sequence spans 137 residues: Interferon-induced transmembrane protein 3 (137 aa).

At 1 to 57 (MNHTSQAFVNAATGGQPPNYERIKEEYEVSELGAPHGSASVRTTVINMPREVSVPDH) the chain is on the cytoplasmic side. Position 20 is a phosphotyrosine (Tyr-20). Lys-24 participates in a covalent cross-link: Glycyl lysine isopeptide (Lys-Gly) (interchain with G-Cter in ubiquitin). Tyr-27 carries the post-translational modification Phosphotyrosine. The helical intramembrane region spans 58–78 (VVWSLFNTLFMNFCCLGFIAY). The interaction with SPP1 stretch occupies residues 60-93 (WSLFNTLFMNFCCLGFIAYAYSVKSRDRKMVGDM). S-palmitoyl cysteine attachment occurs at residues Cys-71 and Cys-72. The Cytoplasmic portion of the chain corresponds to 79 to 109 (AYSVKSRDRKMVGDMTGAQAYASTAKCLNIS). Residues Lys-83, Lys-88, and Lys-104 each participate in a glycyl lysine isopeptide (Lys-Gly) (interchain with G-Cter in ubiquitin) cross-link. Cys-105 carries S-palmitoyl cysteine lipidation. The segment at 108–133 (ISSLVLSILMVIITIVTVVIIALNAP) is interaction with VAPA. Residues 110–130 (SLVLSILMVIITIVTVVIIAL) form a helical membrane-spanning segment. The Extracellular portion of the chain corresponds to 131 to 137 (NAPRLQT).

Belongs to the CD225/Dispanin family. In terms of assembly, interacts with ATP6V0B. Interacts with CD81. Interacts with SPP1; the interaction reduces OPN expression. Interacts with BRI3. In terms of processing, polyubiquitinated with both 'Lys-48' and 'Lys-63' linkages. Ubiquitination negatively regulates antiviral activity. Lys-24 is the most prevalent ubiquitination site. Phosphorylation at Tyr-20 is required for endosomal and lysosomal location.

It is found in the cell membrane. The protein localises to the late endosome membrane. Its subcellular location is the early endosome membrane. It localises to the lysosome membrane. The protein resides in the cytoplasm. It is found in the perinuclear region. Functionally, IFN-induced antiviral protein which disrupts intracellular cholesterol homeostasis. Inhibits the entry of viruses to the host cell cytoplasm by preventing viral fusion with cholesterol depleted endosomes. May inactivate new enveloped viruses which buds out of the infected cell, by letting them go out with a cholesterol depleted membrane. Active against multiple viruses. Plays a critical role in the structural stability and function of vacuolar ATPase (v-ATPase). Establishes physical contact with the v-ATPase of endosomes which is critical for proper clathrin localization and is also required for the function of the v-ATPase to lower the pH in phagocytic endosomes thus establishing an antiviral state. This chain is Interferon-induced transmembrane protein 3, found in Rattus norvegicus (Rat).